Reading from the N-terminus, the 209-residue chain is MSTYPIIIGVAGGSASGKTSVAQAILQRVGADRIAHIDHDRYYKDLSHLPLEERAKFNFDHPDALDNDLLVAHLDALCAGQSVDLPTYDYATYVRLPQTERIEPRPVILVEGILIFYEPVLRRRMQIKLFVDTDADLRFIRRLRRDIVERGRSVESVIEQYLATVRPMHLEFVEPTKRYADVIFPGGGRNPIAIDMVVARIEAALQATP.

12–19 (GGSASGKT) contributes to the ATP binding site.

It belongs to the uridine kinase family.

Its subcellular location is the cytoplasm. It carries out the reaction uridine + ATP = UMP + ADP + H(+). The enzyme catalyses cytidine + ATP = CMP + ADP + H(+). It functions in the pathway pyrimidine metabolism; CTP biosynthesis via salvage pathway; CTP from cytidine: step 1/3. The protein operates within pyrimidine metabolism; UMP biosynthesis via salvage pathway; UMP from uridine: step 1/1. In Chloroflexus aurantiacus (strain ATCC 29366 / DSM 635 / J-10-fl), this protein is Uridine kinase.